The following is a 144-amino-acid chain: Macromomycin (144 aa).

The N-terminal stretch at 1 to 32 is a signal peptide; it reads MLQNTSRFLARAGATVGVAAGLAFSLPADRDG. Cystine bridges form between Cys68–Cys78 and Cys120–Cys125.

The protein belongs to the neocarzinostatin family.

Binds non-covalently to a chromophore which is the cytotoxic and mutagenic component of the antibiotic. The chromophore binds to DNA as a weak intercalator and causes single- and double-strand breaks. This chain is Macromomycin, found in Streptomyces macromomyceticus.